Reading from the N-terminus, the 227-residue chain is Cytochrome c oxidase subunit 2 (227 aa).

The Mitochondrial intermembrane segment spans residues 1-14 (MAYPFELGFQDATS). A helical membrane pass occupies residues 15 to 45 (PIMEELLHFHDHTLMIVFLISSLVLYIISLM). At 46 to 59 (LTTKLTHTSTMDAQ) the chain is on the mitochondrial matrix side. A helical membrane pass occupies residues 60–87 (EVETIWTILPAIILILIALPSLRILYMM). Residues 88–227 (DEINDPSLTV…HFENWSSSML (140 aa)) are Mitochondrial intermembrane-facing. 6 residues coordinate Cu cation: H161, C196, E198, C200, H204, and M207. Position 198 (E198) interacts with Mg(2+).

The protein belongs to the cytochrome c oxidase subunit 2 family. In terms of assembly, component of the cytochrome c oxidase (complex IV, CIV), a multisubunit enzyme composed of 14 subunits. The complex is composed of a catalytic core of 3 subunits MT-CO1, MT-CO2 and MT-CO3, encoded in the mitochondrial DNA, and 11 supernumerary subunits COX4I, COX5A, COX5B, COX6A, COX6B, COX6C, COX7A, COX7B, COX7C, COX8 and NDUFA4, which are encoded in the nuclear genome. The complex exists as a monomer or a dimer and forms supercomplexes (SCs) in the inner mitochondrial membrane with NADH-ubiquinone oxidoreductase (complex I, CI) and ubiquinol-cytochrome c oxidoreductase (cytochrome b-c1 complex, complex III, CIII), resulting in different assemblies (supercomplex SCI(1)III(2)IV(1) and megacomplex MCI(2)III(2)IV(2)). Found in a complex with TMEM177, COA6, COX18, COX20, SCO1 and SCO2. Interacts with TMEM177 in a COX20-dependent manner. Interacts with COX20. Interacts with COX16. Cu cation is required as a cofactor.

The protein resides in the mitochondrion inner membrane. The catalysed reaction is 4 Fe(II)-[cytochrome c] + O2 + 8 H(+)(in) = 4 Fe(III)-[cytochrome c] + 2 H2O + 4 H(+)(out). Its function is as follows. Component of the cytochrome c oxidase, the last enzyme in the mitochondrial electron transport chain which drives oxidative phosphorylation. The respiratory chain contains 3 multisubunit complexes succinate dehydrogenase (complex II, CII), ubiquinol-cytochrome c oxidoreductase (cytochrome b-c1 complex, complex III, CIII) and cytochrome c oxidase (complex IV, CIV), that cooperate to transfer electrons derived from NADH and succinate to molecular oxygen, creating an electrochemical gradient over the inner membrane that drives transmembrane transport and the ATP synthase. Cytochrome c oxidase is the component of the respiratory chain that catalyzes the reduction of oxygen to water. Electrons originating from reduced cytochrome c in the intermembrane space (IMS) are transferred via the dinuclear copper A center (CU(A)) of subunit 2 and heme A of subunit 1 to the active site in subunit 1, a binuclear center (BNC) formed by heme A3 and copper B (CU(B)). The BNC reduces molecular oxygen to 2 water molecules using 4 electrons from cytochrome c in the IMS and 4 protons from the mitochondrial matrix. The protein is Cytochrome c oxidase subunit 2 (MT-CO2) of Neotamias bulleri (Buller's chipmunk).